A 382-amino-acid polypeptide reads, in one-letter code: Pyrimidine monooxygenase RutA (382 aa).

Residues 68 to 69 (IK), N134, E143, 159 to 160 (RY), and S209 each bind FMN.

It belongs to the NtaA/SnaA/DszA monooxygenase family. RutA subfamily.

The catalysed reaction is uracil + FMNH2 + NADH + O2 = (Z)-3-ureidoacrylate + FMN + NAD(+) + H2O + H(+). The enzyme catalyses thymine + FMNH2 + NADH + O2 = (Z)-2-methylureidoacrylate + FMN + NAD(+) + H2O + H(+). In terms of biological role, catalyzes the pyrimidine ring opening between N-3 and C-4 by an unusual flavin hydroperoxide-catalyzed mechanism, adding oxygen atoms in the process to yield ureidoacrylate peracid, that immediately reacts with FMN forming ureidoacrylate and FMN-N(5)-oxide. The FMN-N(5)-oxide reacts spontaneously with NADH to produce FMN. Requires the flavin reductase RutF to regenerate FMN in vivo. The protein is Pyrimidine monooxygenase RutA of Escherichia coli O45:K1 (strain S88 / ExPEC).